The chain runs to 138 residues: Proofreading thioesterase EntH (138 aa).

Catalysis depends on Glu64, which acts as the Nucleophile or proton acceptor.

The protein belongs to the thioesterase PaaI family. In terms of assembly, homotetramer. Dimer of dimers. Interacts specifically with the aryl carrier protein (ArCP) domain of EntB.

The protein resides in the cytoplasm. Its pathway is siderophore biosynthesis; enterobactin biosynthesis. Its function is as follows. Required for optimal enterobactin synthesis. Acts as a proofreading enzyme that prevents EntB misacylation by hydrolyzing the thioester bound existing between EntB and wrongly charged molecules. The sequence is that of Proofreading thioesterase EntH from Salmonella arizonae (strain ATCC BAA-731 / CDC346-86 / RSK2980).